The following is a 195-amino-acid chain: A-type ATP synthase subunit E (195 aa).

This sequence belongs to the V-ATPase E subunit family. In terms of assembly, has multiple subunits with at least A(3), B(3), C, D, E, F, H, I and proteolipid K(x).

The protein localises to the cell membrane. Component of the A-type ATP synthase that produces ATP from ADP in the presence of a proton gradient across the membrane. This chain is A-type ATP synthase subunit E, found in Staphylothermus marinus (strain ATCC 43588 / DSM 3639 / JCM 9404 / F1).